A 332-amino-acid chain; its full sequence is Probable endo-beta-1,4-glucanase B (332 aa).

Residues 1-18 (MKFQSTLLLAAAAGSALA) form the signal peptide. N-linked (GlcNAc...) asparagine glycosylation is found at asparagine 38 and asparagine 100. The active-site Proton donor is glutamate 160. Asparagine 212 carries an N-linked (GlcNAc...) asparagine glycan. The active-site Nucleophile is glutamate 267. An N-linked (GlcNAc...) asparagine glycan is attached at asparagine 289.

The protein belongs to the glycosyl hydrolase 5 (cellulase A) family.

The protein localises to the secreted. The enzyme catalyses Endohydrolysis of (1-&gt;4)-beta-D-glucosidic linkages in cellulose, lichenin and cereal beta-D-glucans.. Functionally, has endoglucanase activity on substrates containing beta-1,4 glycosidic bonds, like in carboxymethylcellulose (CMC), hydroxyethylcellulose (HEC) and beta-glucan. Involved in the degradation of complex natural cellulosic substrates. This Aspergillus kawachii (strain NBRC 4308) (White koji mold) protein is Probable endo-beta-1,4-glucanase B (eglB).